The chain runs to 238 residues: ATP synthase subunit a (238 aa).

The next 5 helical transmembrane spans lie at 17 to 37, 75 to 95, 112 to 132, 172 to 192, and 194 to 214; these read LSNI…AIIC, FHVL…LGLP, DPIV…YYGI, YGNI…LAHI, and IFVG…SLFI.

Belongs to the ATPase A chain family. F-type ATPases have 2 components, CF(1) - the catalytic core - and CF(0) - the membrane proton channel. CF(1) has five subunits: alpha(3), beta(3), gamma(1), delta(1), epsilon(1). CF(0) has three main subunits: a(1), b(2) and c(9-12). The alpha and beta chains form an alternating ring which encloses part of the gamma chain. CF(1) is attached to CF(0) by a central stalk formed by the gamma and epsilon chains, while a peripheral stalk is formed by the delta and b chains.

The protein localises to the cell membrane. Functionally, key component of the proton channel; it plays a direct role in the translocation of protons across the membrane. This Listeria monocytogenes serovar 1/2a (strain ATCC BAA-679 / EGD-e) protein is ATP synthase subunit a.